Here is a 369-residue protein sequence, read N- to C-terminus: Anhydro-N-acetylmuramic acid kinase (369 aa).

Position 12 to 19 (Gly12 to Asp19) interacts with ATP.

The protein belongs to the anhydro-N-acetylmuramic acid kinase family.

The catalysed reaction is 1,6-anhydro-N-acetyl-beta-muramate + ATP + H2O = N-acetyl-D-muramate 6-phosphate + ADP + H(+). Its pathway is amino-sugar metabolism; 1,6-anhydro-N-acetylmuramate degradation. It participates in cell wall biogenesis; peptidoglycan recycling. Catalyzes the specific phosphorylation of 1,6-anhydro-N-acetylmuramic acid (anhMurNAc) with the simultaneous cleavage of the 1,6-anhydro ring, generating MurNAc-6-P. Is required for the utilization of anhMurNAc either imported from the medium or derived from its own cell wall murein, and thus plays a role in cell wall recycling. The polypeptide is Anhydro-N-acetylmuramic acid kinase (Escherichia coli O157:H7).